Reading from the N-terminus, the 250-residue chain is ATP synthase subunit a (250 aa).

A run of 5 helical transmembrane segments spans residues 27 to 47, 86 to 106, 129 to 149, 191 to 211, and 219 to 239; these read TDTVLSTAIAGLIVIALAFYL, FVLPLAVTIFVFILISNWLAV, INYVLALALFVFVCYHTAGIW, IFAGGILVALIALFPPYIMWA, and FDLFVGAIQAFIFALLTILYF.

The protein belongs to the ATPase A chain family. F-type ATPases have 2 components, CF(1) - the catalytic core - and CF(0) - the membrane proton channel. CF(1) has five subunits: alpha(3), beta(3), gamma(1), delta(1), epsilon(1). CF(0) has three main subunits: a(1), b(2) and c(9-12). The alpha and beta chains form an alternating ring which encloses part of the gamma chain. CF(1) is attached to CF(0) by a central stalk formed by the gamma and epsilon chains, while a peripheral stalk is formed by the delta and b chains.

It localises to the cell membrane. Key component of the proton channel; it plays a direct role in the translocation of protons across the membrane. This Mycobacterium bovis (strain ATCC BAA-935 / AF2122/97) protein is ATP synthase subunit a.